We begin with the raw amino-acid sequence, 132 residues long: Large ribosomal subunit protein uL22c (132 aa).

This sequence belongs to the universal ribosomal protein uL22 family. Part of the 50S ribosomal subunit.

The protein localises to the plastid. Its subcellular location is the chloroplast. In terms of biological role, this protein binds specifically to 23S rRNA. Functionally, the globular domain of the protein is located near the polypeptide exit tunnel on the outside of the subunit, while an extended beta-hairpin is found that lines the wall of the exit tunnel in the center of the 70S ribosome. The sequence is that of Large ribosomal subunit protein uL22c (rpl22) from Populus trichocarpa (Western balsam poplar).